Consider the following 300-residue polypeptide: uncharacterized protein (300 aa).

Transmembrane regions (helical) follow at residues Leu-13–Leu-35, Met-45–Ser-67, Trp-80–Leu-102, Gly-106–Leu-128, Ile-180–Leu-202, Tyr-217–Leu-236, Pro-243–Val-265, and Tyr-275–Leu-294.

The protein belongs to the EamA transporter family.

It localises to the cell membrane. This is an uncharacterized protein from Haemophilus influenzae (strain ATCC 51907 / DSM 11121 / KW20 / Rd).